Reading from the N-terminus, the 353-residue chain is Phosphoribosylformylglycinamidine cyclo-ligase (353 aa).

It belongs to the AIR synthase family.

Its subcellular location is the cytoplasm. It carries out the reaction 2-formamido-N(1)-(5-O-phospho-beta-D-ribosyl)acetamidine + ATP = 5-amino-1-(5-phospho-beta-D-ribosyl)imidazole + ADP + phosphate + H(+). It participates in purine metabolism; IMP biosynthesis via de novo pathway; 5-amino-1-(5-phospho-D-ribosyl)imidazole from N(2)-formyl-N(1)-(5-phospho-D-ribosyl)glycinamide: step 2/2. This chain is Phosphoribosylformylglycinamidine cyclo-ligase, found in Magnetococcus marinus (strain ATCC BAA-1437 / JCM 17883 / MC-1).